The sequence spans 362 residues: Probable choline-phosphate cytidylyltransferase (362 aa).

Basic and acidic residues predominate over residues 1–37 (MGEEGIKINDTHKRRIDEVEPSEKEDNVERQTKKYNF). The interval 1–79 (MGEEGIKIND…VSPVEEEPRD (79 aa)) is disordered. CTP-binding positions include 109 to 117 (VFDLFHIGH) and K147. Positions 147 and 176 each coordinate substrate. Residues 193–194 (HD), Y198, and 221–225 (RTEGV) contribute to the CTP site. The interval 308-362 (KNPLHGSSEPSSPGPTGFLGGINRWMQRRSSSHYDLPRVGNEIAASSSSATEENH) is disordered. Composition is skewed to low complexity over residues 313-323 (GSSEPSSPGPT) and 351-362 (AASSSSATEENH). S315 and S319 each carry phosphoserine. A Phosphothreonine modification is found at T323. Position 355 is a phosphoserine (S355).

This sequence belongs to the cytidylyltransferase family.

The protein localises to the nucleus. It catalyses the reaction phosphocholine + CTP + H(+) = CDP-choline + diphosphate. This chain is Probable choline-phosphate cytidylyltransferase, found in Schizosaccharomyces pombe (strain 972 / ATCC 24843) (Fission yeast).